The primary structure comprises 478 residues: Odorant receptor coreceptor (478 aa).

At 1–43 the chain is on the cytoplasmic side; it reads MMKMKQQGLVADLLPNIRVMKTFGHFVFNYYNDNSSKYLHKVY. The helical transmembrane segment at 44–64 threads the bilayer; it reads CCVNLFMLLLQFGLCAVNLIV. At 65–73 the chain is on the extracellular side; the sequence is ESADVDDLT. The helical transmembrane segment at 74-94 threads the bilayer; the sequence is ANTITLLFFTHSIVKICYFAI. At 95-133 the chain is on the cytoplasmic side; the sequence is RSKYFYRTWAIWNNPNSHPLFAESNARYHAIALKKMRLL. The chain crosses the membrane as a helical span at residues 134–154; sequence LFLVGGTTMLAAVAWTVLTFF. The Extracellular segment spans residues 155–190; the sequence is EHPIRKIVDPVTNETEIIELPQLLIRSFYPFDAGKG. A glycan (N-linked (GlcNAc...) asparagine) is linked at asparagine 167. A helical membrane pass occupies residues 191–211; that stretch reads ITHVLVLVYQFYWVLFMLIDA. Residues 212–349 lie on the Cytoplasmic side of the membrane; the sequence is NSLDVLFCSW…IVRLVTAVGD (138 aa). Positions 261-281 are disordered; that stretch reads SADHLRDGDNPPPPPPPQSDN. The helical transmembrane segment at 350–370 threads the bilayer; that stretch reads AYGFALLLHMLTTTITLTLLA. The Extracellular portion of the chain corresponds to 371-382; sequence YQATKVNGINVY. Residues 383 to 403 traverse the membrane as a helical segment; sequence AASTIGYILYTFGQVFLFCIF. Topologically, residues 404–454 are cytoplasmic; it reads GNRLIEESTSVMEAAYSCHWYDGSEEAKTFVQIVCQQCQKAMSISGAKFFT. Residues 455–475 form a helical membrane-spanning segment; that stretch reads VSLDLFASVLGAVVTYFMVLV. Topologically, residues 476-478 are extracellular; it reads QLK.

Belongs to the insect chemoreceptor superfamily. Heteromeric odorant receptor channel (TC 1.A.69) family. Orco subfamily. In terms of assembly, heterodimer with conventional odorant receptors (ORs). In terms of tissue distribution, present in antennae (at protein level).

It localises to the cell membrane. Functionally, odorant coreceptor which complexes with conventional odorant receptors (ORs) to form odorant-sensing units, providing sensitive and prolonged odorant signaling and calcium permeability. Obligate coreceptor of all odorant receptors. Orco is a universal and integral part of the functional odorant receptor, involved in the dendritic localization of other olfactory receptors. Can form functional ion channels in the absence of an odor-binding odorant receptor. Plays a central role in the perception of olfactory stimuli in ants and is essential for ant social organization. Required for pheromone sensing. Also required for the development and maintenance of odorant receptor neurons (ORNs) and of antennal lobe glomeruli. This is Odorant receptor coreceptor from Ooceraea biroi (Clonal raider ant).